Here is a 424-residue protein sequence, read N- to C-terminus: UPF0415 protein C7orf25 homolog (424 aa).

It belongs to the UPF0415 family.

This chain is UPF0415 protein C7orf25 homolog, found in Xenopus laevis (African clawed frog).